A 311-amino-acid polypeptide reads, in one-letter code: MSKILVFGHQNPDSDAIGSSVAFAYLAKEAYGLDTEAVALGTPNEETAFVLNYFGVEAPRVITSAKAEGAEQVILTDHNEFQQSVSDIAEVEVYGVVDHHRVANFETASPLYMRLEPVGSASSIVYRMFKEHGVAVPKEIAGLMLSGLISDTLLLKSPTTHPTDKIIAPELAELAGVNLEEYGLAMLKAGTNLASKSAEELIDIDAKTFELNGNNVRVAQVNTVDIAEVLERQAEIEAAMQAANESNGYSDFVLMITDIVNSNSEILALGANMDKVEAAFNFKLENNHAFLAGAVSRKKQVVPQLTESFNA.

The Mn(2+) site is built by H9, D13, D15, D77, H99, and D151.

Belongs to the PPase class C family. It depends on Mn(2+) as a cofactor.

It is found in the cytoplasm. The enzyme catalyses diphosphate + H2O = 2 phosphate + H(+). The sequence is that of Probable manganese-dependent inorganic pyrophosphatase from Streptococcus pneumoniae (strain JJA).